The following is a 313-amino-acid chain: Formimidoylglutamase (313 aa).

Mn(2+) contacts are provided by His130, Asp155, His157, Asp159, Asp241, and Asp243.

It belongs to the arginase family. The cofactor is Mn(2+).

It carries out the reaction N-formimidoyl-L-glutamate + H2O = formamide + L-glutamate. It participates in amino-acid degradation; L-histidine degradation into L-glutamate; L-glutamate from N-formimidoyl-L-glutamate (hydrolase route): step 1/1. Functionally, catalyzes the conversion of N-formimidoyl-L-glutamate to L-glutamate and formamide. The chain is Formimidoylglutamase from Salmonella enteritidis PT4 (strain P125109).